A 313-amino-acid polypeptide reads, in one-letter code: HPr kinase/phosphorylase (313 aa).

Catalysis depends on residues His-140 and Lys-161. 155–162 is a binding site for ATP; it reads GNSGAGKS. Residue Ser-162 participates in Mg(2+) binding. Asp-179 acts as the Proton acceptor; for phosphorylation activity. Proton donor; for dephosphorylation activity in catalysis. The important for the catalytic mechanism of both phosphorylation and dephosphorylation stretch occupies residues 203–212; that stretch reads IEVRGLGILN. Residue Glu-204 participates in Mg(2+) binding. The active site involves Arg-246. The interval 267–272 is important for the catalytic mechanism of dephosphorylation; the sequence is PVAAGR.

This sequence belongs to the HPrK/P family. As to quaternary structure, homohexamer. It depends on Mg(2+) as a cofactor.

It carries out the reaction [HPr protein]-L-serine + ATP = [HPr protein]-O-phospho-L-serine + ADP + H(+). The catalysed reaction is [HPr protein]-O-phospho-L-serine + phosphate + H(+) = [HPr protein]-L-serine + diphosphate. Catalyzes the ATP- as well as the pyrophosphate-dependent phosphorylation of a specific serine residue in HPr, a phosphocarrier protein of the phosphoenolpyruvate-dependent sugar phosphotransferase system (PTS). HprK/P also catalyzes the pyrophosphate-producing, inorganic phosphate-dependent dephosphorylation (phosphorolysis) of seryl-phosphorylated HPr (P-Ser-HPr). The protein is HPr kinase/phosphorylase of Azoarcus sp. (strain BH72).